We begin with the raw amino-acid sequence, 423 residues long: Glutamyl-tRNA reductase (423 aa).

Residues 49–52, Ser106, 111–113, and Gln117 each bind substrate; these read TCNR and EPQ. The Nucleophile role is filled by Cys50. 186–191 is an NADP(+) binding site; sequence GAGDTS.

The protein belongs to the glutamyl-tRNA reductase family. As to quaternary structure, homodimer.

It catalyses the reaction (S)-4-amino-5-oxopentanoate + tRNA(Glu) + NADP(+) = L-glutamyl-tRNA(Glu) + NADPH + H(+). The protein operates within porphyrin-containing compound metabolism; protoporphyrin-IX biosynthesis; 5-aminolevulinate from L-glutamyl-tRNA(Glu): step 1/2. Its function is as follows. Catalyzes the NADPH-dependent reduction of glutamyl-tRNA(Glu) to glutamate 1-semialdehyde (GSA). The sequence is that of Glutamyl-tRNA reductase from Idiomarina loihiensis (strain ATCC BAA-735 / DSM 15497 / L2-TR).